A 324-amino-acid chain; its full sequence is Appendage-associated protein (324 aa).

A signal peptide spans 1–32; the sequence is MGCPVSRGGSPGCGRRIAEELRLAEDARLRLA. Positions 195-255 form a coiled coil; it reads IAQAKEIAQA…AADKLQALGK (61 aa).

It is found in the secreted. In terms of biological role, associates with actin filament appendages that are formed in the inclusion appendages of the parasitophorous vacuole during infection of the host erythrocyte. This is Appendage-associated protein (aaaP1) from Anaplasma marginale (strain Florida).